A 280-amino-acid polypeptide reads, in one-letter code: Bis(5'-nucleosyl)-tetraphosphatase, symmetrical (280 aa).

It belongs to the Ap4A hydrolase family.

The catalysed reaction is P(1),P(4)-bis(5'-adenosyl) tetraphosphate + H2O = 2 ADP + 2 H(+). Its function is as follows. Hydrolyzes diadenosine 5',5'''-P1,P4-tetraphosphate to yield ADP. In Shigella flexneri serotype 5b (strain 8401), this protein is Bis(5'-nucleosyl)-tetraphosphatase, symmetrical.